The primary structure comprises 437 residues: Protein farnesyltransferase subunit beta (437 aa).

PFTB repeat units follow at residues 123–164 (ATDV…CIIG), 174–215 (REKL…SLTN), 222–263 (FEGT…VILK), 270–312 (LKSL…PLLH), and 332–374 (QQAL…SIAQ). (2E,6E)-farnesyl diphosphate-binding positions include 248–251 (HGGY) and 291–294 (RCNK). Residues Asp-297 and Cys-299 each coordinate Zn(2+). Residue 300 to 303 (YSFW) participates in (2E,6E)-farnesyl diphosphate binding. His-362 contacts Zn(2+). Ser-432 is subject to Phosphoserine. Position 436 is a phosphothreonine (Thr-436).

The protein belongs to the protein prenyltransferase subunit beta family. In terms of assembly, heterodimer of FNTA and FNTB. The cofactor is Zn(2+).

The catalysed reaction is L-cysteinyl-[protein] + (2E,6E)-farnesyl diphosphate = S-(2E,6E)-farnesyl-L-cysteinyl-[protein] + diphosphate. In terms of biological role, essential subunit of the farnesyltransferase complex. Catalyzes the transfer of a farnesyl moiety from farnesyl diphosphate to a cysteine at the fourth position from the C-terminus of several proteins having the C-terminal sequence Cys-aliphatic-aliphatic-X. This chain is Protein farnesyltransferase subunit beta (Fntb), found in Rattus norvegicus (Rat).